Reading from the N-terminus, the 441-residue chain is Leucine-rich repeat-containing protein 17 (441 aa).

A signal peptide spans 1-18 (MRVVTIVILLCFCKAAEL). LRR repeat units follow at residues 82–103 (DLLHMLLARNKIRTLKNNMFSK), 106–127 (KLKSLDLQQNEISKIESEAFFG), and 130–151 (KLTTLLLQHNQIKVLTEEVFIY). The LRRCT 1 domain maps to 163-214 (NPWHCTCEIETLISMLQIPRNRNLGNYAKCESPQEQKNKKLRQIKSEQLCNE). The 44-residue stretch at 225-268 (QVSGRPPVIKPEVDSTFCHNYVFPIQTLDCKRKELKKVPNNIPP) folds into the LRRNT domain. LRR repeat units lie at residues 269-290 (DIVKLDLSYNKINQLRPKEFED), 293-314 (ELKKLNLSSNGIEFIDPAAFLG), and 317-340 (HLEELDLSNNSLQNFDYGVLEDLY). One can recognise an LRRCT 2 domain in the interval 350–402 (NPWRCDYNIHYLYYWLKHHYNVHFNGLECKTPEEYKGWSVGKYIRSYYEECPK).

In terms of tissue distribution, expressed in osteoblast cell lines. Well expressed in ovary, heart, pancreas, skeletal muscle, lung, and fetal kidney and lung and only at the basal levels in the other tissues examined including adult kidney. More expressed in S-type neuroblastoma cells than in N-type neuroblastoma cells.

Its subcellular location is the secreted. It is found in the extracellular space. In terms of biological role, involved in bone homeostasis. Acts as a negative regulator of RANKL-induced osteoclast precursor differentiation from bone marrow precursors. The sequence is that of Leucine-rich repeat-containing protein 17 (LRRC17) from Homo sapiens (Human).